A 997-amino-acid polypeptide reads, in one-letter code: NLR family CARD domain-containing protein 4 (997 aa).

The region spanning 1 to 88 (MDLIRKNYAE…FFYEDLIGQR (88 aa)) is the CARD domain. Residues 95–300 (EEDLENLADH…RCGALIAETS (206 aa)) form a nucleotide-binding domain (NBD) region. In terms of domain architecture, NACHT spans 165–478 (SPCVIEGEAG…VTKGEDFLNK (314 aa)). 171-178 (GEAGKGKT) contributes to the ATP binding site. Residues 358-465 (MNTQTTLFST…RLSQLLSSED (108 aa)) are winged-helix domain (WHD). 12 LRR repeats span residues 550–570 (LFSE…HIEF), 629–652 (NQSI…DIKY), 708–731 (MTEM…LLEG), 735–758 (LVGL…TLAE), 760–785 (ILSL…ESIA), 797–820 (ELKL…LYSL), 821–843 (SHIE…SVEE), 851–875 (LDAI…VLPT), 884–905 (ELAF…SYIN), 908–935 (FENL…ILQY), 937–958 (PNLT…DLVR), and 972–994 (TMEL…AKNM).

It is found in the cytoplasm. The protein resides in the cytosol. Functionally, key component of inflammasomes that indirectly senses specific proteins from pathogenic bacteria and fungi and responds by assembling an inflammasome complex that promotes caspase-1 activation, cytokine production and macrophage pyroptosis. This Xenopus tropicalis (Western clawed frog) protein is NLR family CARD domain-containing protein 4 (nlrc4).